We begin with the raw amino-acid sequence, 252 residues long: Ribosomal RNA small subunit methyltransferase J (252 aa).

Residues 101-102 (RD), 117-118 (ER), 153-154 (SS), and Asp171 contribute to the S-adenosyl-L-methionine site.

The protein belongs to the methyltransferase superfamily. RsmJ family.

It is found in the cytoplasm. The enzyme catalyses guanosine(1516) in 16S rRNA + S-adenosyl-L-methionine = N(2)-methylguanosine(1516) in 16S rRNA + S-adenosyl-L-homocysteine + H(+). Functionally, specifically methylates the guanosine in position 1516 of 16S rRNA. This is Ribosomal RNA small subunit methyltransferase J from Salmonella schwarzengrund (strain CVM19633).